The following is a 350-amino-acid chain: Ion-translocating oxidoreductase complex subunit D (350 aa).

Helical transmembrane passes span 20 to 40, 42 to 62, 89 to 109, and 123 to 143; these read IMLLVLLAAVPGIVVQTWFFG, GTVLQIVLAALTAWATEAAIL, IPPLAPWWMVVLGTAFAVVIA, and PAMIGYVVLLISFPVQMTSWL. Thr-187 carries the FMN phosphoryl threonine modification. Transmembrane regions (helical) follow at residues 214–234, 242–262, 267–287, 301–321, and 322–342; these read VLAGLGWQWVNIAWLAGGLFL, WHIPVSFLLSLGLCATLGWLF, LASPQMHLFSGATMLGAFFIL, LIFGALAGLLVWLIRSFGGYP, and DGVAFAVLLANITVPLIDYYT.

The protein belongs to the NqrB/RnfD family. In terms of assembly, the complex is composed of six subunits: RnfA, RnfB, RnfC, RnfD, RnfE and RnfG. FMN serves as cofactor.

Its subcellular location is the cell inner membrane. In terms of biological role, part of a membrane-bound complex that couples electron transfer with translocation of ions across the membrane. The polypeptide is Ion-translocating oxidoreductase complex subunit D (Klebsiella pneumoniae (strain 342)).